Consider the following 378-residue polypeptide: Peptide methionine sulfoxide reductase MsrA/MsrB (378 aa).

Residues 40–197 (QQATLAGGCF…KVRYNYYRYA (158 aa)) form a peptide methionine sulfoxide reductase A region. C48 is a catalytic residue. Positions 240–362 (DEQIRAKLTS…NSAAMRFIPK (123 aa)) constitute a MsrB domain. Catalysis depends on C351, which acts as the Nucleophile.

This sequence in the N-terminal section; belongs to the MsrA Met sulfoxide reductase family. It in the C-terminal section; belongs to the MsrB Met sulfoxide reductase family.

It carries out the reaction L-methionyl-[protein] + [thioredoxin]-disulfide + H2O = L-methionyl-(S)-S-oxide-[protein] + [thioredoxin]-dithiol. It catalyses the reaction [thioredoxin]-disulfide + L-methionine + H2O = L-methionine (S)-S-oxide + [thioredoxin]-dithiol. The catalysed reaction is L-methionyl-[protein] + [thioredoxin]-disulfide + H2O = L-methionyl-(R)-S-oxide-[protein] + [thioredoxin]-dithiol. Functionally, has an important function as a repair enzyme for proteins that have been inactivated by oxidation. Catalyzes the reversible oxidation-reduction of methionine sulfoxide in proteins to methionine. The chain is Peptide methionine sulfoxide reductase MsrA/MsrB (msrAB) from Vibrio cholerae serotype O1 (strain ATCC 39315 / El Tor Inaba N16961).